A 351-amino-acid chain; its full sequence is Phosphate acyltransferase (351 aa).

This sequence belongs to the PlsX family. In terms of assembly, homodimer. Probably interacts with PlsY.

The protein localises to the cytoplasm. The enzyme catalyses a fatty acyl-[ACP] + phosphate = an acyl phosphate + holo-[ACP]. It participates in lipid metabolism; phospholipid metabolism. Functionally, catalyzes the reversible formation of acyl-phosphate (acyl-PO(4)) from acyl-[acyl-carrier-protein] (acyl-ACP). This enzyme utilizes acyl-ACP as fatty acyl donor, but not acyl-CoA. This is Phosphate acyltransferase from Maricaulis maris (strain MCS10) (Caulobacter maris).